We begin with the raw amino-acid sequence, 196 residues long: Small ribosomal subunit protein uS4c (196 aa).

The segment at 17–36 (ALPGLTRKTPKSGSNLKKKF) is disordered. The region spanning 89–157 (MRLDNILFRL…VQNYIASSDP (69 aa)) is the S4 RNA-binding domain.

Belongs to the universal ribosomal protein uS4 family. Part of the 30S ribosomal subunit. Contacts protein S5. The interaction surface between S4 and S5 is involved in control of translational fidelity.

The protein resides in the plastid. The protein localises to the chloroplast. Functionally, one of the primary rRNA binding proteins, it binds directly to 16S rRNA where it nucleates assembly of the body of the 30S subunit. In terms of biological role, with S5 and S12 plays an important role in translational accuracy. The sequence is that of Small ribosomal subunit protein uS4c (rps4) from Calamagrostis epigeios (Wood small-reed grass).